The following is a 420-amino-acid chain: UDP-N-acetyl-D-mannosamine dehydrogenase (420 aa).

NAD(+) contacts are provided by Tyr13, Ile14, Asp33, Thr85, and Thr126. UDP-N-acetyl-alpha-D-mannosaminouronate-binding residues include Arg160, Val161, Lys212, Asn216, Arg219, His250, Arg252, and Gly263. The Proton donor/acceptor role is filled by Lys212. Cys266 (nucleophile) is an active-site residue. The UDP-N-acetyl-alpha-D-mannosaminouronate site is built by Phe330 and Lys331. An NAD(+)-binding site is contributed by Arg338. Lys416 is a UDP-N-acetyl-alpha-D-mannosaminouronate binding site.

The protein belongs to the UDP-glucose/GDP-mannose dehydrogenase family. WecC subfamily. In terms of assembly, homodimer.

The enzyme catalyses UDP-N-acetyl-alpha-D-mannosamine + 2 NAD(+) + H2O = UDP-N-acetyl-alpha-D-mannosaminouronate + 2 NADH + 3 H(+). The protein operates within bacterial outer membrane biogenesis; enterobacterial common antigen biosynthesis. Catalyzes the four-electron oxidation of UDP-N-acetyl-D-mannosamine (UDP-ManNAc), reducing NAD(+) and releasing UDP-N-acetylmannosaminuronic acid (UDP-ManNAcA). The sequence is that of UDP-N-acetyl-D-mannosamine dehydrogenase from Salmonella typhi.